Consider the following 186-residue polypeptide: Ribosome-recycling factor (186 aa).

It belongs to the RRF family.

Its subcellular location is the cytoplasm. Responsible for the release of ribosomes from messenger RNA at the termination of protein biosynthesis. May increase the efficiency of translation by recycling ribosomes from one round of translation to another. The protein is Ribosome-recycling factor of Bartonella quintana (strain Toulouse) (Rochalimaea quintana).